The chain runs to 315 residues: Acetyl-coenzyme A carboxylase carboxyl transferase subunit alpha (315 aa).

One can recognise a CoA carboxyltransferase C-terminal domain in the interval 38-292 (RLQKKSNELT…KLRLKEDLAE (255 aa)).

The protein belongs to the AccA family. Acetyl-CoA carboxylase is a heterohexamer composed of biotin carboxyl carrier protein (AccB), biotin carboxylase (AccC) and two subunits each of ACCase subunit alpha (AccA) and ACCase subunit beta (AccD).

The protein localises to the cytoplasm. The enzyme catalyses N(6)-carboxybiotinyl-L-lysyl-[protein] + acetyl-CoA = N(6)-biotinyl-L-lysyl-[protein] + malonyl-CoA. Its pathway is lipid metabolism; malonyl-CoA biosynthesis; malonyl-CoA from acetyl-CoA: step 1/1. In terms of biological role, component of the acetyl coenzyme A carboxylase (ACC) complex. First, biotin carboxylase catalyzes the carboxylation of biotin on its carrier protein (BCCP) and then the CO(2) group is transferred by the carboxyltransferase to acetyl-CoA to form malonyl-CoA. This is Acetyl-coenzyme A carboxylase carboxyl transferase subunit alpha from Haemophilus influenzae (strain PittEE).